Consider the following 324-residue polypeptide: 2-oxoisovalerate dehydrogenase subunit beta (324 aa).

Residues glutamate 29, 58–60, glutamine 82, and 86–89 each bind thiamine diphosphate; these read LSE and YIFP. Substrate is bound by residues 83–86 and histidine 129; that span reads FADY. The active-site Proton acceptor is histidine 129.

As to quaternary structure, heterotetramer of two alpha and two beta chains. Directly associated with ODBA in the E1 complex. The cofactor is thiamine diphosphate.

It catalyses the reaction N(6)-[(R)-lipoyl]-L-lysyl-[protein] + 3-methyl-2-oxobutanoate + H(+) = N(6)-[(R)-S(8)-2-methylpropanoyldihydrolipoyl]-L-lysyl-[protein] + CO2. Functionally, the branched-chain alpha-keto dehydrogenase complex catalyzes the overall conversion of alpha-keto acids to acyl-CoA and CO(2). It contains multiple copies of three enzymatic components: branched-chain alpha-keto acid decarboxylase (E1), lipoamide acyltransferase (E2) and lipoamide dehydrogenase (E3). This chain is 2-oxoisovalerate dehydrogenase subunit beta, found in Thermus thermophilus (strain ATCC BAA-163 / DSM 7039 / HB27).